Reading from the N-terminus, the 2562-residue chain is Zinc finger homeobox protein 2 (2562 aa).

The segment covering 1–13 (MATLNSASPSGTV) has biased composition (polar residues). 2 disordered regions span residues 1–88 (MATL…PPKD) and 337–410 (PSPP…DPPP). Residues 56–73 (GGERLESGSDLDPPKEIG) show a composition bias toward basic and acidic residues. C2H2-type zinc fingers lie at residues 446-469 (LKCPKCNWHYKYQQTLDVHMREKH) and 501-525 (YRCDVCNYSTTTKGNLSIHMQSDKH). Disordered regions lie at residues 530–559 (QGFQAGPGGQASPPEASLPPTSVGDKEPKT), 603–651 (PPGL…PDKP), and 669–705 (RKFPTAAPGSLSPETHLPPSQLLGSSSDGLPTSPSPD). Residues 609–622 (PGPPPPPGAAPTNP) show a composition bias toward pro residues. A compositionally biased stretch (polar residues) spans 690–704 (LLGSSSDGLPTSPSP). C2H2-type zinc fingers lie at residues 752–776 (HRCKLCCYGTQLKANFQLHLKTDKH), 815–839 (LRCNICDFESNSKEKMQLHTRGSAH), and 864–888 (YHCLLCAWDTPSRLALLQHLRTPAH). The disordered stretch occupies residues 923-966 (RLQTPGKASDTPLAQPPTSEKDAQNKTEQQASEVTEDRSGPPRD). The C2H2-type 6 zinc-finger motif lies at 1003-1026 (YRCPLCQEQLVGRPALHFHLSHLH). Disordered regions lie at residues 1058 to 1126 (NPVE…PAPR) and 1140 to 1166 (MSEEEEGAMGEPRSAEPTPADSRHPLT). Pro residues-rich tracts occupy residues 1091 to 1101 (SPDPPLEPPLA) and 1114 to 1124 (DQPPSPAPSPA). C2H2-type zinc fingers lie at residues 1185–1211 (YKCTVCKESFTQKNILLVHYNSVSHLH) and 1242–1266 (FKCTVCRVSYNQSSTLEIHMRSVLH). Positions 1278–1305 (RAEGAERGQEEFKEGETEGEAGTEKKGP) are enriched in basic and acidic residues. A disordered region spans residues 1278-1313 (RAEGAERGQEEFKEGETEGEAGTEKKGPDPGGFMSG). The C2H2-type 9 zinc-finger motif lies at 1474–1497 (LACGACGKLFSNMLILKTHEEHVH). The segment at 1520–1584 (LYPPPVEPPK…EGSRGSLPPA (65 aa)) is disordered. The span at 1521–1531 (YPPPVEPPKPP) shows a compositional bias: pro residues. Residues 1589 to 1648 (RRFSRTKFTEFQTQALQSFFETSAYPKDGEVERLASLLGLASRVVVVWFQNARQKARKNA) constitute a DNA-binding region (homeobox 1). The C2H2-type 10; degenerate zinc finger occupies 1664–1687 (SGCRRCHATFACVFELVRHLKKCY). The segment at 1689-1760 (DQPPEEEEEA…EGKAPPSPPV (72 aa)) is disordered. The segment covering 1690-1713 (QPPEEEEEAERGEEEEEVEEEEAE) has biased composition (acidic residues). The span at 1743 to 1752 (TRPESKESEG) shows a compositional bias: basic and acidic residues. The C2H2-type 11 zinc-finger motif lies at 1761–1783 (YACDQCAASFPSQDLLTTHHRLH). Disordered stretches follow at residues 1814–1853 (SGTSSVTGTPLKRKHDDGSLSPTGSEAGGGGEGEPPKDKR), 1907–1934 (RKGQFRSTPGGVAGPAVKPTVPPSPAPF), 1971–2057 (PLPF…DSMG), 2114–2136 (KKAKLQGTAPPGSGGSSEGTSAA), 2186–2210 (PAPETPLAPKGPPATTPASSVPLGA), 2263–2313 (QTAG…PNSS), and 2391–2429 (LQQPPQAPEPTATAPPKPPELPASGEGESSEADELLTGS). Residues 1851–1910 (DKRLRTTILPEQLEILYRWYMQDSNPTRKMLDCISEEVGLKKRVVQVWFQNTRARERKGQ) constitute a DNA-binding region (homeobox 2). Residues 1985–1996 (TPEPPPPLPPPA) show a composition bias toward pro residues. Low complexity predominate over residues 2008–2037 (KASPESEACSPSAGDLSDSSASSLAEPESP). Residues 2038–2051 (GAGGTSGGPGGGTG) show a composition bias toward gly residues. The homeobox 3 DNA-binding region spans 2058–2117 (QRRYRTQMSSLQLKIMKACYEAYRTPTMQECEVLGEEIGLPKRVIQVWFQNARAKEKKAK). The segment covering 2188–2200 (PETPLAPKGPPAT) has biased composition (pro residues). The segment covering 2275 to 2286 (PVSNQTNSSTDP) has biased composition (polar residues). Over residues 2295 to 2305 (SGDKVSGERKP) the composition is skewed to basic and acidic residues. Positions 2395 to 2411 (PQAPEPTATAPPKPPEL) are enriched in pro residues. The C2H2-type 12; degenerate zinc finger occupies 2441–2461 (YLCRQCKMAFDGEAPATAHQR). Residues 2485–2509 (YHCLACEVLLSGREALASHLRSSAH) form a C2H2-type 13 zinc finger. Disordered stretches follow at residues 2506–2525 (SSAHRRKAAPPPGGPPITVT) and 2540–2562 (EEARLPHTDPNPKTTTTSTLLAL). Over residues 2553-2562 (TTTTSTLLAL) the composition is skewed to low complexity.

Expressed in brain (at protein level). Expressed at the highest levels in the pyramidal cell layer of the hippocampus, the suprachiasmatic nucleus, laterodorsal thalamic nucleus, lateral geniculate nucleus, substantia nigra pars compacta, and magnocellular part of the red nucleus (at protein level). Highly expressed in dorsal root ganglia. Expressed at lower levels in kidney, stomach, liver, heart and testis.

It localises to the nucleus. Functionally, transcriptional regulator that is critical for the regulation of pain perception and processing of noxious stimuli. In Mus musculus (Mouse), this protein is Zinc finger homeobox protein 2.